A 438-amino-acid polypeptide reads, in one-letter code: tRNA-2-methylthio-N(6)-dimethylallyladenosine synthase (438 aa).

The MTTase N-terminal domain occupies 2–118 (KSFYLETFGC…LADMVRDAEL (117 aa)). 6 residues coordinate [4Fe-4S] cluster: Cys11, Cys47, Cys81, Cys157, Cys161, and Cys164. The Radical SAM core domain maps to 143–373 (PSAEVSRFVT…LALQEEITRQ (231 aa)). The 63-residue stretch at 376–438 (QMDIGQVLPV…YRNSHLGERV (63 aa)) folds into the TRAM domain.

The protein belongs to the methylthiotransferase family. MiaB subfamily. In terms of assembly, monomer. Requires [4Fe-4S] cluster as cofactor.

It localises to the cytoplasm. The catalysed reaction is N(6)-dimethylallyladenosine(37) in tRNA + (sulfur carrier)-SH + AH2 + 2 S-adenosyl-L-methionine = 2-methylsulfanyl-N(6)-dimethylallyladenosine(37) in tRNA + (sulfur carrier)-H + 5'-deoxyadenosine + L-methionine + A + S-adenosyl-L-homocysteine + 2 H(+). Its function is as follows. Catalyzes the methylthiolation of N6-(dimethylallyl)adenosine (i(6)A), leading to the formation of 2-methylthio-N6-(dimethylallyl)adenosine (ms(2)i(6)A) at position 37 in tRNAs that read codons beginning with uridine. This Syntrophotalea carbinolica (strain DSM 2380 / NBRC 103641 / GraBd1) (Pelobacter carbinolicus) protein is tRNA-2-methylthio-N(6)-dimethylallyladenosine synthase.